The primary structure comprises 479 residues: Endo-beta-1,6-galactanase (479 aa).

Positions 1-20 (MRSIVLPSLALALFSQRARA) are cleaved as a signal peptide. Asparagine 89 is a glycosylation site (N-linked (GlcNAc...) asparagine). The Proton donor role is filled by glutamate 210. Asparagine 271 carries N-linked (GlcNAc...) asparagine glycosylation. Glutamate 311 (nucleophile) is an active-site residue. A glycan (N-linked (GlcNAc...) asparagine) is linked at asparagine 358.

The catalysed reaction is Endohydrolysis of (1-&gt;6)-beta-D-galactosidic linkages in arabinogalactan proteins and (1-&gt;3):(1-&gt;6)-beta-galactans to yield galactose and beta-(1-&gt;6)-galactaobiose as the final products.. In terms of biological role, hydrolyzes galactooligomers with a degree of polymerization higher than 3. Hydrolyzes radish root arabinogalactan-protein. Does not hydrolyze dextran, arabinan, starch, laminarin, beta-1,4- and beta-1,3-galactans, larch wood arabinogalactan or acid-insoluble polygalacturonic acid. The protein is Endo-beta-1,6-galactanase of Hypocrea rufa (Trichoderma viride).